Reading from the N-terminus, the 180-residue chain is Bifunctional protein PyrR (180 aa).

Residues 39–40, 103–111, and Arg-136 each bind substrate; these read TR and DDVLYTGRT. Residues 99–111 carry the PRPP-binding motif; that stretch reads VILIDDVLYTGRT.

The protein belongs to the purine/pyrimidine phosphoribosyltransferase family. PyrR subfamily. As to quaternary structure, homodimer and homohexamer; in equilibrium.

It catalyses the reaction UMP + diphosphate = 5-phospho-alpha-D-ribose 1-diphosphate + uracil. Its function is as follows. Regulates transcriptional attenuation of the pyrimidine nucleotide (pyr) operon by binding in a uridine-dependent manner to specific sites on pyr mRNA. This disrupts an antiterminator hairpin in the RNA and favors formation of a downstream transcription terminator, leading to a reduced expression of downstream genes. Also displays a weak uracil phosphoribosyltransferase activity which is not physiologically significant. The chain is Bifunctional protein PyrR from Halalkalibacterium halodurans (strain ATCC BAA-125 / DSM 18197 / FERM 7344 / JCM 9153 / C-125) (Bacillus halodurans).